Reading from the N-terminus, the 271-residue chain is Phosphonoacetaldehyde hydrolase (271 aa).

The Nucleophile role is filled by Asp-12. Mg(2+)-binding residues include Asp-12 and Ala-14. Catalysis depends on Lys-54, which acts as the Schiff-base intermediate with substrate. Residue Asp-188 coordinates Mg(2+).

Belongs to the HAD-like hydrolase superfamily. PhnX family. Homodimer. It depends on Mg(2+) as a cofactor.

It carries out the reaction phosphonoacetaldehyde + H2O = acetaldehyde + phosphate + H(+). Functionally, involved in phosphonate degradation. The protein is Phosphonoacetaldehyde hydrolase of Vibrio cholerae serotype O1 (strain ATCC 39541 / Classical Ogawa 395 / O395).